We begin with the raw amino-acid sequence, 245 residues long: tRNA pseudouridine synthase A (245 aa).

Residue D52 is the Nucleophile of the active site. Position 110 (Y110) interacts with substrate.

This sequence belongs to the tRNA pseudouridine synthase TruA family. As to quaternary structure, homodimer.

It carries out the reaction uridine(38/39/40) in tRNA = pseudouridine(38/39/40) in tRNA. Its function is as follows. Formation of pseudouridine at positions 38, 39 and 40 in the anticodon stem and loop of transfer RNAs. The chain is tRNA pseudouridine synthase A from Borrelia turicatae (strain 91E135).